The primary structure comprises 959 residues: Glycine dehydrogenase (decarboxylating) (959 aa).

Lys-708 is modified (N6-(pyridoxal phosphate)lysine).

Belongs to the GcvP family. The glycine cleavage system is composed of four proteins: P, T, L and H. It depends on pyridoxal 5'-phosphate as a cofactor.

It carries out the reaction N(6)-[(R)-lipoyl]-L-lysyl-[glycine-cleavage complex H protein] + glycine + H(+) = N(6)-[(R)-S(8)-aminomethyldihydrolipoyl]-L-lysyl-[glycine-cleavage complex H protein] + CO2. The glycine cleavage system catalyzes the degradation of glycine. The P protein binds the alpha-amino group of glycine through its pyridoxal phosphate cofactor; CO(2) is released and the remaining methylamine moiety is then transferred to the lipoamide cofactor of the H protein. This Yersinia pseudotuberculosis serotype O:1b (strain IP 31758) protein is Glycine dehydrogenase (decarboxylating).